The following is a 914-amino-acid chain: MDLASRYKGVVGMVFGDNQSSNEDSYIQRLLDRISNGTLPDDRRTAIVELQSVVAESNAAQLAFGAAGFPVIVGILKDQRDDLEMVRGALETLLGALTPIDHARAQKTEVQAALMNSDLLSREAENITLLLSLLEEEDFYVRYYTLQILTALLMNSQNRLQEAILTTPRGITRLMDMLMDREVIRNEALLLLTHLTREAEEIQKIVVFEGAFEKIFSIIKEEGGSDGDVVVQDCLELLNNLLRSSSSNQILLRETMGFEPIISILKLRGITYKFTQQKTVNLLSALETINMLIMGRADTEPGKDSNKLANRTVLVQKKLLDYLLMLGVESQWAPVAVRCMTFKCIGDLIDGHPKNRDILASKVLGEDRQVEPALNSILRIILQTSSIQEFVAADYVFKTFCEKNTEGQTMLASTLIPQPHPTSRDHLEDDVHMSFGSMLLRGLCSGEADGDLETCCRAASILSHVVKDNLRCKEKALKIVLESPMPSMGTPEPLFQRIVRYLAVASSMKSKEKSSTLGKSYIQQIILKLLVTWTVDCPTAVQCFLDSRHHLTFLLELVTDPAATVCIRGLASILLGECVIYNKSIENGKDAFSVVDAVGQKMGLTSYFSKFEEMQNSFIFSPSKKPPQGYKPLTRTPTPSEAEINEVDEVDEMVKGNEDHPMLLSLFDASFIGLVKSLEGNIRERIVDVYSRPKSEVAVVPADLEQKSGENEKDYINRLKAFIEKQCSEIQNLLARNAALAEDVASSGRNEQSQGSEQRASTVMDKVQMESIRRELQETSQRLETVKAEKAKIESEASSNKNMAAKLEFDLKSLSDAYNSLEQANYHLEQEVKSLKGGESPMQFPDIEAIKEEVRKEAQKESEDELNDLLVCLGQEESKVEKLSAKLIELGVDVDKLLEDIGDESEAQAESEED.

2 coiled-coil regions span residues Ile-723–Gly-837 and Glu-863–Ile-901. Position 911 is a phosphoserine (Ser-911).

It localises to the golgi apparatus. The protein resides in the golgi stack. Functionally, golgi matrix protein playing a role in tethering of vesicles to Golgi membranes and in maintaining the overall structure of the Golgi apparatus. Functions in the anterograde transport of storage protein precursors from the endoplasmic reticulum (ER) to the Golgi complex. The polypeptide is Golgin candidate 6 (GC6) (Arabidopsis thaliana (Mouse-ear cress)).